The chain runs to 355 residues: Glucose-6-phosphatase 2 (355 aa).

The Lumenal portion of the chain corresponds to 1–24 (MDFLHRNGVLIIQHLQKDYRAYYT). A helical transmembrane segment spans residues 25 to 45 (FLNFMSNVGDPRNIFFIYFPL). The Cytoplasmic portion of the chain corresponds to 46 to 56 (CFQFNQTVGTK). A helical membrane pass occupies residues 57 to 77 (MIWVAVIGDWLNLIFKWILFG). Residues 78–115 (HRPYWWVQETQIYPNHSSPCLEQFPTTCETGPGSPSGH) lie on the Lumenal side of the membrane. Arg79 contributes to the substrate binding site. A glycan (N-linked (GlcNAc...) asparagine) is linked at Asn92. His115 (proton donor) is an active-site residue. The chain crosses the membrane as a helical span at residues 116–136 (AMGASCVWYVMVTAALSHTVC). Over 137–146 (GMDKFSITLH) the chain is Cytoplasmic. The helical transmembrane segment at 147–167 (RLTWSFLWSVFWLIQISVCIS) threads the bilayer. Residue Arg168 is a topological domain, lumenal. Arg168 provides a ligand contact to substrate. Residues 169–189 (VFIATHFPHQVILGVIGGMLV) form a helical membrane-spanning segment. Catalysis depends on His174, which acts as the Nucleophile. Residues 190–211 (AEAFEHTPGIQTASLGTYLKTN) lie on the Cytoplasmic side of the membrane. Residues 212 to 232 (LFLFLFAVGFYLLLRVLNIDL) traverse the membrane as a helical segment. At 233–261 (LWSVPIAKKWCANPDWIHIDTTPFAGLVR) the chain is on the lumenal side. Residues 262–282 (NLGVLFGLGFAINSEMFLLSC) traverse the membrane as a helical segment. Residues 283 to 293 (RGGNNYTLSFR) lie on the Cytoplasmic side of the membrane. The helical transmembrane segment at 294 to 314 (LLCALTSLTILQLYHFLQIPT) threads the bilayer. The Lumenal portion of the chain corresponds to 315–318 (HEEH). A helical membrane pass occupies residues 319-339 (LFYVLSFCKSASIPLTVVAFI). The Cytoplasmic portion of the chain corresponds to 340-355 (PYSVHMLMKQSGKKSQ). A Prevents secretion from ER motif is present at residues 352-355 (KKSQ).

It belongs to the glucose-6-phosphatase family. N-glycosylated; the non-glycosylated form is more unstable and is degraded through the proteasome. In terms of tissue distribution, specifically expressed in pancreas and also detected to a lower extent in testis. Expressed by most islet cells in the pancreas (at protein level).

It localises to the endoplasmic reticulum membrane. It catalyses the reaction D-glucose 6-phosphate + H2O = D-glucose + phosphate. It participates in carbohydrate biosynthesis; gluconeogenesis. Its function is as follows. May hydrolyze glucose-6-phosphate to glucose in the endoplasmic reticulum. May be responsible for glucose production through glycogenolysis and gluconeogenesis. This is Glucose-6-phosphatase 2 (G6PC2) from Homo sapiens (Human).